The following is a 336-amino-acid chain: MLESDRLISSQSIVSEDAMDRAIRPLSLSEYVGQDSVSSQMQIFINAARKRNDPLDHVLIFGPPGLGKTTLANIIAHEMGVNIRQTSGPVIERAGDIAAILTNLQQNDVLFIDEIHRLSPVIEEILYPAMEDYKLDIMIGEGPAARSIKLELPPFTLIGATTRAGLLTSPLRDRFGIVQRLEYYSVDSLTQIVARSAHLLGVPTKPEGAREIALRSRGTPRIANRLLRRVRDYSEVKGNGIITVDMAQQALEMLEVDQHGFDLMDRKLLLAVIEHFNGGPVGIDSIAAAIGEEKGTIEDVLEPFLIQQGFLMRTPRGRIATSKAYQHFGFSAIEQE.

The segment at 4 to 184 (SDRLISSQSI…FGIVQRLEYY (181 aa)) is large ATPase domain (RuvB-L). ATP-binding positions include isoleucine 23, arginine 24, glycine 65, lysine 68, threonine 69, threonine 70, 131-133 (EDY), arginine 174, tyrosine 184, and arginine 221. A Mg(2+)-binding site is contributed by threonine 69. Residues 185 to 255 (SVDSLTQIVA…MAQQALEMLE (71 aa)) are small ATPAse domain (RuvB-S). The tract at residues 258–336 (QHGFDLMDRK…HFGFSAIEQE (79 aa)) is head domain (RuvB-H). 2 residues coordinate DNA: arginine 313 and arginine 318.

The protein belongs to the RuvB family. In terms of assembly, homohexamer. Forms an RuvA(8)-RuvB(12)-Holliday junction (HJ) complex. HJ DNA is sandwiched between 2 RuvA tetramers; dsDNA enters through RuvA and exits via RuvB. An RuvB hexamer assembles on each DNA strand where it exits the tetramer. Each RuvB hexamer is contacted by two RuvA subunits (via domain III) on 2 adjacent RuvB subunits; this complex drives branch migration. In the full resolvosome a probable DNA-RuvA(4)-RuvB(12)-RuvC(2) complex forms which resolves the HJ.

The protein localises to the cytoplasm. The enzyme catalyses ATP + H2O = ADP + phosphate + H(+). Functionally, the RuvA-RuvB-RuvC complex processes Holliday junction (HJ) DNA during genetic recombination and DNA repair, while the RuvA-RuvB complex plays an important role in the rescue of blocked DNA replication forks via replication fork reversal (RFR). RuvA specifically binds to HJ cruciform DNA, conferring on it an open structure. The RuvB hexamer acts as an ATP-dependent pump, pulling dsDNA into and through the RuvAB complex. RuvB forms 2 homohexamers on either side of HJ DNA bound by 1 or 2 RuvA tetramers; 4 subunits per hexamer contact DNA at a time. Coordinated motions by a converter formed by DNA-disengaged RuvB subunits stimulates ATP hydrolysis and nucleotide exchange. Immobilization of the converter enables RuvB to convert the ATP-contained energy into a lever motion, pulling 2 nucleotides of DNA out of the RuvA tetramer per ATP hydrolyzed, thus driving DNA branch migration. The RuvB motors rotate together with the DNA substrate, which together with the progressing nucleotide cycle form the mechanistic basis for DNA recombination by continuous HJ branch migration. Branch migration allows RuvC to scan DNA until it finds its consensus sequence, where it cleaves and resolves cruciform DNA. The protein is Holliday junction branch migration complex subunit RuvB of Legionella pneumophila subsp. pneumophila (strain Philadelphia 1 / ATCC 33152 / DSM 7513).